A 347-amino-acid chain; its full sequence is CCN family member 2 (347 aa).

Residues 1-24 (MLASVAGPVSLALVLLLCTRPATG) form the signal peptide. The IGFBP N-terminal domain maps to 25-96 (QDCSAQCQCA…NRKIGVCTAK (72 aa)). Cystine bridges form between cysteine 27-cysteine 52, cysteine 31-cysteine 54, cysteine 33-cysteine 55, cysteine 41-cysteine 58, cysteine 66-cysteine 80, and cysteine 72-cysteine 93. In terms of domain architecture, VWFC spans 99-165 (APCVFGGSVY…GKCCEEWVCD (67 aa)). The TSP type-1 domain occupies 196–241 (NCLVQTTEWSACSKTCGMGISTRVTNDNTFCRLEKQSRLCMVRPCE). The segment at 245 to 347 (EENIKKGKKC…YYRKMYGDMA (103 aa)) is heparin-binding. Disulfide bonds link cysteine 254-cysteine 291, cysteine 271-cysteine 305, cysteine 282-cysteine 321, cysteine 285-cysteine 323, and cysteine 290-cysteine 327. The CTCK domain maps to 254-328 (CIRTPKIAKP…KTCACHYNCP (75 aa)).

It belongs to the CCN family. As to quaternary structure, monomer. Interacts with TSKU.

The protein resides in the secreted. It is found in the extracellular space. It localises to the extracellular matrix. Major connective tissue mitoattractant secreted by vascular endothelial cells. Promotes proliferation and differentiation of chondrocytes. Is involved in the stimulation of osteoblast differentiation and has a critical role in osteogenesis. Mediates heparin- and divalent cation-dependent cell adhesion in many cell types including fibroblasts, myofibroblasts, endothelial and epithelial cells. Enhances fibroblast growth factor-induced DNA synthesis. The sequence is that of CCN family member 2 from Rattus norvegicus (Rat).